Here is a 383-residue protein sequence, read N- to C-terminus: ATP phosphoribosyltransferase regulatory subunit (383 aa).

This sequence belongs to the class-II aminoacyl-tRNA synthetase family. HisZ subfamily. Heteromultimer composed of HisG and HisZ subunits.

It is found in the cytoplasm. Its pathway is amino-acid biosynthesis; L-histidine biosynthesis; L-histidine from 5-phospho-alpha-D-ribose 1-diphosphate: step 1/9. In terms of biological role, required for the first step of histidine biosynthesis. May allow the feedback regulation of ATP phosphoribosyltransferase activity by histidine. This Cupriavidus necator (strain ATCC 17699 / DSM 428 / KCTC 22496 / NCIMB 10442 / H16 / Stanier 337) (Ralstonia eutropha) protein is ATP phosphoribosyltransferase regulatory subunit.